A 597-amino-acid polypeptide reads, in one-letter code: MSAILSADDLNDFISPGVACIKPVESLPQKESQSENPYEVTKEDKVQPENLPPAQISLTDCLACSGCVTSAEAVLISLQSHTEVLNTLDSYPELPLGSTSYQRGTQKVGSADSDGRIFVASVSPQVRASLAATYGITEREAKYMIDQFLMGPHGLRAGGKHGNGFTWVVDTNVMREAVLALTADEVTSSLLSTGSGSLPKSPILSSACPGWICYAEKTHPFILPHLSRLKSPQALSGTFLKSVLSKALGVPPSQIWHLAIMPCFDKKLEASREELTDIAWASTFTQSQTTPVRDVDCVITTRELLTLATARGLSLPNLPLKPLPASCLTPFPDQALESFLFSKSSSGQTVESGTSGGYLHHVLQIFQARNPGSKIVTQRGRNADVVEYVLMSSGDEPLFRAARYYGFRNIQNLVRKLKPARVSRLPGAKPQAVSSSANRRQPMSRNAAPAGTGADYAYVEVMACPGGCTNGGGQIRIEDAREAVPNALKETSTETPVAAPKPTPHEQRAWLARVDEAYYSADSDSEGSVTTEPVSVLSRDNQIHEFLNYWSEKVDIPLSRLAYTSYREVESDVGKTKNAPNETARVVELAGKIGGGW.

Cys-20 lines the [4Fe-4S] cluster pocket. Residues 25–46 (ESLPQKESQSENPYEVTKEDKV) are disordered. [4Fe-4S] cluster contacts are provided by Cys-61, Cys-64, Cys-67, Cys-208, and Cys-263. A disordered region spans residues 424–449 (RLPGAKPQAVSSSANRRQPMSRNAAP). The segment covering 432 to 444 (AVSSSANRRQPMS) has biased composition (polar residues). Cys-464 and Cys-468 together coordinate [4Fe-4S] cluster.

Belongs to the NARF family.

In terms of biological role, component of the cytosolic Fe/S protein assembly machinery. Required for maturation of extramitochondrial Fe/S proteins. May play a role in the transfer of pre-assembled Fe/S clusters to target apoproteins. This chain is Cytosolic Fe-S cluster assembly factor nar1 (nar1), found in Aspergillus fumigatus (strain ATCC MYA-4609 / CBS 101355 / FGSC A1100 / Af293) (Neosartorya fumigata).